Here is a 315-residue protein sequence, read N- to C-terminus: Glycine--tRNA ligase alpha subunit (315 aa).

This sequence belongs to the class-II aminoacyl-tRNA synthetase family. As to quaternary structure, tetramer of two alpha and two beta subunits.

Its subcellular location is the cytoplasm. The catalysed reaction is tRNA(Gly) + glycine + ATP = glycyl-tRNA(Gly) + AMP + diphosphate. This Pseudomonas syringae pv. tomato (strain ATCC BAA-871 / DC3000) protein is Glycine--tRNA ligase alpha subunit.